The primary structure comprises 446 residues: Glucose-1-phosphate adenylyltransferase (446 aa).

Alpha-D-glucose 1-phosphate-binding positions include Tyr-119, Gly-184, 199-200, and Ser-217; that span reads EK.

It belongs to the bacterial/plant glucose-1-phosphate adenylyltransferase family. As to quaternary structure, homotetramer.

The enzyme catalyses alpha-D-glucose 1-phosphate + ATP + H(+) = ADP-alpha-D-glucose + diphosphate. It participates in glycan biosynthesis; glycogen biosynthesis. In terms of biological role, involved in the biosynthesis of ADP-glucose, a building block required for the elongation reactions to produce glycogen. Catalyzes the reaction between ATP and alpha-D-glucose 1-phosphate (G1P) to produce pyrophosphate and ADP-Glc. The polypeptide is Glucose-1-phosphate adenylyltransferase (Rhodopirellula baltica (strain DSM 10527 / NCIMB 13988 / SH1)).